Consider the following 128-residue polypeptide: Protein Wnt-8 (128 aa).

Ser1 carries O-palmitoleoyl serine lipidation. 2 cysteine pairs are disulfide-bonded: Cys71/Cys109 and Cys87/Cys102. 2 N-linked (GlcNAc...) asparagine glycosylation sites follow: Asn74 and Asn93.

The protein belongs to the Wnt family. In terms of processing, palmitoleoylation is required for efficient binding to frizzled receptors. Depalmitoleoylation leads to Wnt signaling pathway inhibition. Post-translationally, proteolytic processing by tiki1 and tiki2 promotes oxidation and formation of large disulfide-bond oligomers, leading to inactivation of wnt8.

It localises to the secreted. Its subcellular location is the extracellular space. The protein resides in the extracellular matrix. In terms of biological role, ligand for members of the frizzled family of seven transmembrane receptors. Probable developmental protein. May be a signaling molecule which affects the development of discrete regions of tissues. Is likely to signal over only few cell diameters. This is Protein Wnt-8 (wnt8) from Thunnus thynnus (Atlantic bluefin tuna).